We begin with the raw amino-acid sequence, 161 residues long: Nucleotide-binding protein Glov_3198 (161 aa).

The protein belongs to the YajQ family.

Nucleotide-binding protein. The chain is Nucleotide-binding protein Glov_3198 from Trichlorobacter lovleyi (strain ATCC BAA-1151 / DSM 17278 / SZ) (Geobacter lovleyi).